We begin with the raw amino-acid sequence, 476 residues long: MNILFAVSECVPFVKSGGLADVAGALPKELKKLGVDVRIILPNYSLIPQKLRDGCTLHKVINVPLGWRNQYCGILKGEQDGITYYLIDNEYYFKRDSLYGHYDDGERFSYFSKAVLECIPHLDFEVDVLHSHDWHTAMVNFLLREKYQDNPLYERIKTVYTIHNLQFQGVFPPEVMYDLLELGDEYFHSKQLEFYGNVNFMKGGIIASDQITAVSPTYKEEIQYEFFGEKLDGLLRKYNDKLSGIVNGIDTSVYNPETDSYIKAQYDAESLYEKSENKRALQRYFGLPEKEDTPIISMVTRLTKQKGLDLVRTVFREIMEEDVQCIILGSGDSEYEQFFEWMAYEYPEKVKVYIGFNEELAHQVYAGSDLFLMPSLFEPCGLGQLIALAYGTIPIVRETGGLNDTVHSYDEETGEGNGFSFTNFNAHDMLHTIHRAIEFYHDKPVWEQLVKQAMTEDYSWEQSALAYKELYKSLME.

Lysine 15 provides a ligand contact to ADP-alpha-D-glucose.

The protein belongs to the glycosyltransferase 1 family. Bacterial/plant glycogen synthase subfamily.

The catalysed reaction is [(1-&gt;4)-alpha-D-glucosyl](n) + ADP-alpha-D-glucose = [(1-&gt;4)-alpha-D-glucosyl](n+1) + ADP + H(+). Its pathway is glycan biosynthesis; glycogen biosynthesis. Functionally, synthesizes alpha-1,4-glucan chains using ADP-glucose. The chain is Glycogen synthase from Bacillus cereus (strain B4264).